A 417-amino-acid polypeptide reads, in one-letter code: UDP-N-acetylglucosamine 1-carboxyvinyltransferase 2 (417 aa).

22-23 (KN) contributes to the phosphoenolpyruvate binding site. Position 92 (arginine 92) interacts with UDP-N-acetyl-alpha-D-glucosamine. Cysteine 116 acts as the Proton donor in catalysis. At cysteine 116 the chain carries 2-(S-cysteinyl)pyruvic acid O-phosphothioketal. UDP-N-acetyl-alpha-D-glucosamine-binding positions include 121 to 125 (RPIDL), aspartate 305, and isoleucine 327.

It belongs to the EPSP synthase family. MurA subfamily.

Its subcellular location is the cytoplasm. The enzyme catalyses phosphoenolpyruvate + UDP-N-acetyl-alpha-D-glucosamine = UDP-N-acetyl-3-O-(1-carboxyvinyl)-alpha-D-glucosamine + phosphate. The protein operates within cell wall biogenesis; peptidoglycan biosynthesis. In terms of biological role, cell wall formation. Adds enolpyruvyl to UDP-N-acetylglucosamine. The sequence is that of UDP-N-acetylglucosamine 1-carboxyvinyltransferase 2 from Caldanaerobacter subterraneus subsp. tengcongensis (strain DSM 15242 / JCM 11007 / NBRC 100824 / MB4) (Thermoanaerobacter tengcongensis).